The following is a 1867-amino-acid chain: TATA-binding protein-associated factor MOT1 (1867 aa).

Ser-93 carries the post-translational modification Phosphoserine. Residues Lys-169 to Ser-228 are disordered. The span at Asn-181–Met-203 shows a compositional bias: low complexity. The Nuclear localization signal signature appears at Lys-195–Ser-211. 3 HEAT repeats span residues Trp-289–Tyr-326, Gly-445–Lys-482, and Trp-541–Asp-578. At Ser-677 the chain carries Phosphoserine. HEAT repeat units lie at residues Ser-1108–Val-1145 and Pro-1188–Leu-1225. Positions Ala-1284–Gly-1457 constitute a Helicase ATP-binding domain. Residue Asp-1297–Thr-1304 coordinates ATP. The DEGH box motif lies at Asp-1408–His-1411. The stretch at Ala-1495–Met-1537 is one HEAT 6 repeat. The region spanning Pro-1639 to Gly-1787 is the Helicase C-terminal domain. The tract at residues Pro-1802–Lys-1822 is disordered.

Belongs to the SNF2/RAD54 helicase family. As to quaternary structure, forms a complex with TBP which binds TATA DNA with high affinity but with altered specificity.

It is found in the mitochondrion. The protein localises to the nucleus. Its function is as follows. Regulates transcription in association with TATA binding protein (TBP). Removes TBP from the TATA box via its C-terminal ATPase activity. Both transcription activation and repression require its ATPase activity. The sequence is that of TATA-binding protein-associated factor MOT1 (MOT1) from Saccharomyces cerevisiae (strain ATCC 204508 / S288c) (Baker's yeast).